The following is a 229-amino-acid chain: Prolactin (229 aa).

A signal peptide spans 1-30 (MSNRGASLKGLFLAVLLVSNTLLTKEGVTS). 3 cysteine pairs are disulfide-bonded: C34–C41, C88–C204, and C221–C229.

This sequence belongs to the somatotropin/prolactin family.

The protein resides in the secreted. This chain is Prolactin (PRL), found in Gallus gallus (Chicken).